Here is a 759-residue protein sequence, read N- to C-terminus: Multifunctional tryptophan biosynthesis protein (759 aa).

The 197-residue stretch at 27 to 223 (PIVMIDNYDS…LNLTAGTWEE (197 aa)) folds into the Glutamine amidotransferase type-1 domain. 80 to 82 (GPG) lines the L-glutamine pocket. Residue C108 is the Nucleophile; for GATase activity of the active site. L-glutamine contacts are provided by residues Q112 and 158–159 (SL). Catalysis depends on for GATase activity residues H197 and E199. Positions 257–519 (ILEKIHAQRL…DPAAFARELL (263 aa)) are indole-3-glycerol phosphate synthase. Residues 536–759 (LVKVCGTRSL…KAFINAVKEL (224 aa)) form an N-(5'-phosphoribosyl)anthranilate isomerase region.

It catalyses the reaction N-(5-phospho-beta-D-ribosyl)anthranilate = 1-(2-carboxyphenylamino)-1-deoxy-D-ribulose 5-phosphate. It carries out the reaction 1-(2-carboxyphenylamino)-1-deoxy-D-ribulose 5-phosphate + H(+) = (1S,2R)-1-C-(indol-3-yl)glycerol 3-phosphate + CO2 + H2O. The enzyme catalyses chorismate + L-glutamine = anthranilate + pyruvate + L-glutamate + H(+). Its pathway is amino-acid biosynthesis; L-tryptophan biosynthesis; L-tryptophan from chorismate: step 1/5. It functions in the pathway amino-acid biosynthesis; L-tryptophan biosynthesis; L-tryptophan from chorismate: step 3/5. It participates in amino-acid biosynthesis; L-tryptophan biosynthesis; L-tryptophan from chorismate: step 4/5. Trifunctional enzyme bearing the Gln amidotransferase (GATase) domain of anthranilate synthase, indole-glycerolphosphate synthase, and phosphoribosylanthranilate isomerase activities. The chain is Multifunctional tryptophan biosynthesis protein (trp1) from Schizosaccharomyces pombe (strain 972 / ATCC 24843) (Fission yeast).